The chain runs to 887 residues: Phosphatidylinositol 3-kinase catalytic subunit type 3 (887 aa).

A C2 PI3K-type domain is found at 35 to 184 (YKAVLEDPML…LAKLTKAHRQ (150 aa)). The tract at residues 150 to 170 (EADGSEPTKTPGRTSSTLSED) is disordered. Residues 156–170 (PTKTPGRTSSTLSED) are compositionally biased toward polar residues. Phosphothreonine; by AMPK is present on T163. S165 carries the phosphoserine; by AMPK modification. Phosphoserine occurs at positions 244, 261, and 282. One can recognise a PIK helical domain in the interval 282-520 (SDHGLKPNAA…PKTHEMYLNV (239 aa)). 2 disordered regions span residues 416 to 435 (EPTK…NSGI) and 446 to 468 (ITSP…SSDG). Residues 423–435 (QGSVSESVSNSGI) show a composition bias toward low complexity. Residues 449 to 459 (PLPPVSSPPPA) show a composition bias toward pro residues. Residues 605-871 (IPETATLFKS…LIDESVHALF (267 aa)) enclose the PI3K/PI4K catalytic domain. The tract at residues 611–617 (LFKSALM) is G-loop. Positions 740 to 748 (GVGDRHLDN) are catalytic loop. The interval 759 to 780 (HIDFGYILGRDPKPLPPPMKLN) is activation loop.

This sequence belongs to the PI3/PI4-kinase family. As to quaternary structure, component of the PI3K (PI3KC3/PI3K-III/class III phosphatidylinositol 3-kinase) complex the core of which is composed of the catalytic subunit PIK3C3, the regulatory subunit PIK3R4 and BECN1 associating with additional regulatory/auxiliary subunits to form alternative complex forms. Alternative complex forms containing a fourth regulatory subunit in a mutually exclusive manner are: the PI3K complex I (PI3KC3-C1) containing ATG14, and the PI3K complex II (PI3KC3-C2) containing UVRAG. PI3KC3-C1 displays a V-shaped architecture with PIK3R4 serving as a bridge between PIK3C3 and the ATG14:BECN1 subcomplex. Both, PI3KC3-C1 and PI3KC3-C2, can associate with further regulatory subunits such as RUBCN, SH3GLB1/Bif-1 and AMBRA1. PI3KC3-C1 probably associates with PIK3CB. Interacts with RAB7A in the presence of PIK3R4. Interacts with AMBRA1. Interacts with BECN1P1/BECN2. Interacts with SLAMF1. May be a component of a complex composed of RAB5A (in GDP-bound form), DYN2 and PIK3C3. Interacts with NCKAP1L. Interacts with ATG14; this interaction is increased in the absence of TMEM39A. Interacts with STEEP1; the interaction is STING1-dependent and required for trafficking of STING1 from the endoplasmic reticulum. Interacts with YWHAG. Interacts with ARMC3. Mn(2+) is required as a cofactor. Ubiquitinated via 'Lys-29'- and 'Lys-48'-linked ubiquitination by UBE3C, promoting its degradation. Deubiquitination by ZRANB1/TRABID promotes its stabilization, leading to autophagosome maturation.

The protein resides in the midbody. It is found in the late endosome. It localises to the cytoplasmic vesicle. Its subcellular location is the autophagosome. The enzyme catalyses a 1,2-diacyl-sn-glycero-3-phospho-(1D-myo-inositol) + ATP = a 1,2-diacyl-sn-glycero-3-phospho-(1D-myo-inositol-3-phosphate) + ADP + H(+). Catalytic subunit of the PI3K complex that mediates formation of phosphatidylinositol 3-phosphate; different complex forms are believed to play a role in multiple membrane trafficking pathways: PI3KC3-C1 is involved in initiation of autophagosomes and PI3KC3-C2 in maturation of autophagosomes and endocytosis. As part of PI3KC3-C1, promotes endoplasmic reticulum membrane curvature formation prior to vesicle budding. Involved in regulation of degradative endocytic trafficking and required for the abscission step in cytokinesis, probably in the context of PI3KC3-C2. Involved in the transport of lysosomal enzyme precursors to lysosomes. Required for transport from early to late endosomes. The polypeptide is Phosphatidylinositol 3-kinase catalytic subunit type 3 (Sus scrofa (Pig)).